Reading from the N-terminus, the 339-residue chain is Retroviral-like aspartic protease 1 (339 aa).

Positions 1–188 are excised as a propeptide; sequence MRNPGGPGWA…SEPEEILFAN (188 aa). A disordered region spans residues 34–53; that stretch reads VPAPFNSSRQGKNTAQPTEP. A compositionally biased stretch (polar residues) spans 38 to 53; sequence FNSSRQGKNTAQPTEP. Asparagine 39 is a glycosylation site (N-linked (GlcNAc...) asparagine). Residues 55–75 form a helical membrane-spanning segment; that stretch reads LSSVIAPTLFCAFLYLACVTA. Residues 205–286 enclose the Peptidase A2 domain; sequence VRFLVDSGAQ…AEEAIIGTDV (82 aa). Aspartate 210 is a catalytic residue. An N-linked (GlcNAc...) asparagine glycan is attached at asparagine 274. The propeptide occupies 325-339; sequence LIEEEEGSSAPEGSH.

In terms of assembly, homodimer. Undergoes autocleavage which is necessary for activation of the protein. Highly expressed in stratified epithelia in skin, tongue, esophagus, forestomach and vagina. Also expressed in trachea, urinary bladder and thymus. Undetectable in simple epithelia. Within the epidermis, expressed exclusively in the granular layer (at protein level). Levels are elevated in benign skin tumors but are down-regulated in squamous cell carcinomas.

The protein localises to the membrane. In terms of biological role, protease responsible for filaggrin processing, essential for the maintenance of a proper epidermis organization. This chain is Retroviral-like aspartic protease 1, found in Mus musculus (Mouse).